The chain runs to 557 residues: Dicarboxylate transporter 1, chloroplastic (557 aa).

A chloroplast-targeting transit peptide spans 1–69 (MASLALSGSC…STLVKASSTV (69 aa)). Helical transmembrane passes span 90–110 (AAIK…FVPV), 122–142 (LAIF…LGAV), 158–178 (FAAA…LAFF), 229–249 (AGGI…SNVG), 256–276 (LGSW…SMFL), 305–325 (AAIV…YLIY), 355–375 (IMAA…KLGV), 376–396 (DAVT…VVTW), 411–431 (WFAA…IEWF), 438–458 (FVGG…LLYF), 477–497 (AFLS…LVLA), and 531–551 (YGFL…GAWW).

The protein belongs to the SLC13A/DASS transporter (TC 2.A.47) family. DIT1 subfamily. In terms of tissue distribution, expressed in roots, rosette and cauline leaves, stems, flowers and siliques.

Its subcellular location is the plastid. The protein localises to the chloroplast inner membrane. 2-oxoglutarate/malate translocator involved with DIT2-1 in primary ammonia assimilation and in the re-assimilation of ammonia generated by the photorespiratory pathway. Imports 2-oxoglutarate into plastids as precursor for ammonia assimilation. 2-oxoglutarate is converted to glutamate, the end product of ammonia assimilation, which is exported to the cytosol by DIT2-1. The protein is Dicarboxylate transporter 1, chloroplastic (DIT1) of Arabidopsis thaliana (Mouse-ear cress).